An 89-amino-acid polypeptide reads, in one-letter code: Small ribosomal subunit protein uS15 (89 aa).

Residues 1 to 10 (MSITAERKAE) are compositionally biased toward basic and acidic residues. The tract at residues 1-24 (MSITAERKAEVIQGNANKAGDTGS) is disordered.

The protein belongs to the universal ribosomal protein uS15 family. As to quaternary structure, part of the 30S ribosomal subunit. Forms a bridge to the 50S subunit in the 70S ribosome, contacting the 23S rRNA.

In terms of biological role, one of the primary rRNA binding proteins, it binds directly to 16S rRNA where it helps nucleate assembly of the platform of the 30S subunit by binding and bridging several RNA helices of the 16S rRNA. Its function is as follows. Forms an intersubunit bridge (bridge B4) with the 23S rRNA of the 50S subunit in the ribosome. The polypeptide is Small ribosomal subunit protein uS15 (Rhodopseudomonas palustris (strain BisB5)).